Reading from the N-terminus, the 89-residue chain is Toxin To14 (89 aa).

Residues 1–19 (MNCLMLIFVVFLLAFGVEC) form the signal peptide. The region spanning 21–85 (KDDYPVDTAK…SPTKTSGRCN (65 aa)) is the LCN-type CS-alpha/beta domain. Disulfide bonds link cysteine 33/cysteine 84, cysteine 37/cysteine 60, cysteine 46/cysteine 67, and cysteine 50/cysteine 69.

As to expression, expressed by the venom gland.

The protein resides in the secreted. Inhibits voltage-gated sodium channels (Nav). The polypeptide is Toxin To14 (Tityus obscurus (Amazonian scorpion)).